A 274-amino-acid polypeptide reads, in one-letter code: MQLLNNWYSLLLTEVAAYFTSTTLFVSILKNAPSLSWLMKYGGHDNFGLKPPLIATKLEVPKRWFWHFYAFISLLNPLFTFFILNTNFPIPIFKNIKEDLMYSKKLQVLLLIYEIHTLRRLYENLRFRKSGSKMLAGHYLLGYLFYTHTFLALLLCGRRSYENTMSSMQFVGLGIYAIGSIWQNASHEHLIAQKNHSQYLVLKKGCFKWITGPHYLGEIIVYTGIALIAQHWLIWLVLGWVLCNMVAISSSYACTVKNKEQSLDFRWTLIPFLY.

5 consecutive transmembrane segments (helical) span residues 9-29 (SLLLTEVAAYFTSTTLFVSIL), 64-84 (WFWHFYAFISLLNPLFTFFIL), 135-155 (LAGHYLLGYLFYTHTFLALLL), 165-185 (MSSMQFVGLGIYAIGSIWQNA), and 219-239 (IIVYTGIALIAQHWLIWLVLG).

This sequence belongs to the steroid 5-alpha reductase family.

It localises to the endoplasmic reticulum membrane. This is an uncharacterized protein from Schizosaccharomyces pombe (strain 972 / ATCC 24843) (Fission yeast).